A 123-amino-acid polypeptide reads, in one-letter code: Large ribosomal subunit protein uL14c (123 aa).

Belongs to the universal ribosomal protein uL14 family. Part of the 50S ribosomal subunit.

The protein localises to the plastid. It localises to the chloroplast. Functionally, binds to 23S rRNA. The protein is Large ribosomal subunit protein uL14c of Oryza nivara (Indian wild rice).